Reading from the N-terminus, the 263-residue chain is Zinc transporter ZupT (263 aa).

The next 5 membrane-spanning stretches (helical) occupy residues 1 to 21 (MLFA…GGLI), 37 to 57 (LGFS…PGAF), 68 to 88 (GGSW…AIID), 116 to 136 (MMKM…PEGF), and 138 to 158 (TFLA…AIAI). Residues Asn-131 and Glu-134 each coordinate Fe(2+). Glu-134 serves as a coordination point for Zn(2+). His-159 contributes to the Zn(2+) binding site. Fe(2+) contacts are provided by Asn-160, Glu-163, and Glu-192. Position 163 (Glu-163) interacts with Zn(2+). The next 3 membrane-spanning stretches (helical) occupy residues 184-204 (WATL…LLLM), 206-226 (FIGP…MVFI), and 243-263 (TAIY…LLFI).

This sequence belongs to the ZIP transporter (TC 2.A.5) family. ZupT subfamily.

It is found in the cell membrane. It carries out the reaction Zn(2+)(in) = Zn(2+)(out). Functionally, mediates zinc uptake. May also transport other divalent cations. This chain is Zinc transporter ZupT, found in Corynebacterium glutamicum (strain ATCC 13032 / DSM 20300 / JCM 1318 / BCRC 11384 / CCUG 27702 / LMG 3730 / NBRC 12168 / NCIMB 10025 / NRRL B-2784 / 534).